Reading from the N-terminus, the 579-residue chain is Rho guanine nucleotide exchange factor 25 (579 aa).

Disordered stretches follow at residues 27-61 (AVPG…GERE) and 172-194 (VKAQ…EQKK). The 177-residue stretch at 199–375 (RSMFVLSELV…CFVPKRCNDM (177 aa)) folds into the DH domain. Residues 317–338 (LGHRLQLSDLLIKPVQRIMKYQ) are important for binding to Rho GTPases. Positions 380–499 (RLRGFEGKLT…ESQTNSLGRS (120 aa)) constitute a PH domain. A sufficient to bind activated GNAQ region spans residues 472–498 (SQRDFLNALQSPIEYQRRESQTNSLGR). 2 disordered regions span residues 487-516 (QRRE…VSMH) and 546-579 (LSET…EDEL).

In terms of assembly, interacts with activated GNAQ and GNA11. Interacts with RHOA, CDC42 and RAC1. Interacts (via the DH domain) with POPDC1 (via the C-terminus cytoplasmic tail).

It is found in the cytoplasm. It localises to the myofibril. The protein localises to the sarcomere. Its subcellular location is the cell membrane. May play a role in actin cytoskeleton reorganization in different tissues since its activation induces formation of actin stress fibers. It works as a guanine nucleotide exchange factor for Rho family of small GTPases. Links specifically G alpha q/11-coupled receptors to RHOA activation. May be an important regulator of processes involved in axon and dendrite formation. In neurons seems to be an exchange factor primarily for RAC1. Involved in skeletal myogenesis. The polypeptide is Rho guanine nucleotide exchange factor 25 (Arhgef25) (Rattus norvegicus (Rat)).